The chain runs to 186 residues: Peptide deformylase 2 (186 aa).

The Fe cation site is built by cysteine 104 and histidine 146. Glutamate 147 is an active-site residue. Histidine 150 serves as a coordination point for Fe cation.

The protein belongs to the polypeptide deformylase family. Fe(2+) is required as a cofactor.

It carries out the reaction N-terminal N-formyl-L-methionyl-[peptide] + H2O = N-terminal L-methionyl-[peptide] + formate. Its function is as follows. Removes the formyl group from the N-terminal Met of newly synthesized proteins. Requires at least a dipeptide for an efficient rate of reaction. N-terminal L-methionine is a prerequisite for activity but the enzyme has broad specificity at other positions. The protein is Peptide deformylase 2 of Streptomyces avermitilis (strain ATCC 31267 / DSM 46492 / JCM 5070 / NBRC 14893 / NCIMB 12804 / NRRL 8165 / MA-4680).